Consider the following 484-residue polypeptide: Phospholipase A1-Ialpha2, chloroplastic (484 aa).

The transit peptide at 1–63 directs the protein to the chloroplast; sequence MALIQNPNMK…LAPVILNSPV (63 aa). Residues 295–299 carry the GXSXG motif; the sequence is GHSMG. Ser297 functions as the Acyl-ester intermediate in the catalytic mechanism. Catalysis depends on charge relay system residues Asp360 and His411.

Belongs to the AB hydrolase superfamily. Lipase family. Ubiquitous. Highest expression in flowers and leaves.

It localises to the plastid. Its subcellular location is the chloroplast. It is found in the plastoglobule. The catalysed reaction is a 1,2-diacyl-3-O-[alpha-D-galactosyl-(1-&gt;6)-beta-D-galactosyl]-sn-glycerol + H2O = acyl-3-O-[alpha-D-galactosyl-(1-&gt;6)-beta-D-galactosyl]-sn-glycerol + a fatty acid + H(+). The enzyme catalyses a 1,2-diacyl-3-O-(beta-D-galactosyl)-sn-glycerol + H2O = an acyl-3-O-(beta-D-galactosyl)-sn-glycerol + a fatty acid + H(+). Acylhydrolase that catalyzes the hydrolysis of phosphatidylcholine at the sn-1 position. Has a strong galactolipase activity toward monogalactosyldiacylglycerol (MGDG) and digalactosyldiacylglycerol (DGDG). Low triacylglycerol (TAG) lipase activity. Plays a role in plant growth and in leaf senescence. The chain is Phospholipase A1-Ialpha2, chloroplastic from Arabidopsis thaliana (Mouse-ear cress).